A 456-amino-acid polypeptide reads, in one-letter code: Argininosuccinate lyase (456 aa).

It belongs to the lyase 1 family. Argininosuccinate lyase subfamily.

The protein localises to the cytoplasm. It catalyses the reaction 2-(N(omega)-L-arginino)succinate = fumarate + L-arginine. It participates in amino-acid biosynthesis; L-arginine biosynthesis; L-arginine from L-ornithine and carbamoyl phosphate: step 3/3. This is Argininosuccinate lyase from Shewanella woodyi (strain ATCC 51908 / MS32).